Consider the following 203-residue polypeptide: Ribosomal RNA small subunit methyltransferase G (203 aa).

S-adenosyl-L-methionine-binding positions include Gly-75, Leu-80, 126–127 (VE), and Arg-141.

Belongs to the methyltransferase superfamily. RNA methyltransferase RsmG family.

Its subcellular location is the cytoplasm. It catalyses the reaction guanosine(527) in 16S rRNA + S-adenosyl-L-methionine = N(7)-methylguanosine(527) in 16S rRNA + S-adenosyl-L-homocysteine. Its function is as follows. Specifically methylates the N7 position of guanine in position 527 of 16S rRNA. In Ruthia magnifica subsp. Calyptogena magnifica, this protein is Ribosomal RNA small subunit methyltransferase G.